The primary structure comprises 562 residues: Alpha-1D adrenergic receptor (562 aa).

Over 1–90 the chain is Extracellular; it reads MTFRDILSVT…VGGLVVSAQG (90 aa). Disordered regions lie at residues 13–44 and 50–69; these read GPRA…GVPG and AVVG…EAGA. Positions 21 to 44 are enriched in gly residues; the sequence is GGSGAGGGAGTVGPEGPAVGGVPG. Asn60 and Asn76 each carry an N-linked (GlcNAc...) asparagine glycan. The chain crosses the membrane as a helical span at residues 91 to 115; sequence VGVGVFLAAFILTAVAGNLLVILSV. Topologically, residues 116–127 are cytoplasmic; sequence ACNRHLQTVTNY. A helical transmembrane segment spans residues 128-153; that stretch reads FIVNLAVADLLLSAAVLPFSATMEVL. Residues 154–163 are Extracellular-facing; sequence GFWPFGRTFC. A helical membrane pass occupies residues 164–186; the sequence is DVWAAVDVLCCTASILSLCTISV. Residues 187-207 are Cytoplasmic-facing; it reads DRYVGVRHSLKYPAIMTERKA. Residues 208-232 traverse the membrane as a helical segment; that stretch reads AAILALLWAVALVVSVGPLLGWKEP. At 233–245 the chain is on the extracellular side; that stretch reads VPPDERFCGITEE. Residues 246-269 traverse the membrane as a helical segment; the sequence is VGYAIFSSVCSFYLPMAVIVVMYC. Topologically, residues 270 to 342 are cytoplasmic; sequence RVYVVARSTT…KFSREKKAAK (73 aa). Residues 343-367 form a helical membrane-spanning segment; it reads TLAIVVGVFVLCWFPFFFVLPLGSL. The Extracellular portion of the chain corresponds to 368 to 374; that stretch reads FPQLKPS. Residues 375–399 traverse the membrane as a helical segment; that stretch reads EGVFKVIFWLGYFNSCVNPLIYPCS. Residues 400–562 are Cytoplasmic-facing; that stretch reads SREFKRAFLR…DLSNLRETDI (163 aa). Cys413 carries the S-palmitoyl cysteine lipid modification. The disordered stretch occupies residues 444–472; sequence QPAHRTPRGSPSPHCTPRPGLRRHAGGAG.

This sequence belongs to the G-protein coupled receptor 1 family. Adrenergic receptor subfamily. ADRA1D sub-subfamily. Interacts with FLNA (via filamin repeat 21); increases PKA-mediated phosphorylation of FLNA. Post-translationally, palmitoylated. Palmitoylation by ZDHHC21 may increase the expression of the receptor and regulate downstream signaling.

Its subcellular location is the cell membrane. This alpha-adrenergic receptor mediates its effect through the influx of extracellular calcium. This is Alpha-1D adrenergic receptor (Adra1d) from Mus musculus (Mouse).